We begin with the raw amino-acid sequence, 410 residues long: tRNA-guanine(15) transglycosylase (410 aa).

The active-site Nucleophile is Asp-87. The substrate site is built by Asp-122 and Gly-187.

The protein belongs to the archaeosine tRNA-ribosyltransferase family. Zn(2+) serves as cofactor.

The catalysed reaction is guanosine(15) in tRNA + 7-cyano-7-deazaguanine = 7-cyano-7-carbaguanosine(15) in tRNA + guanine. It functions in the pathway tRNA modification; archaeosine-tRNA biosynthesis. Functionally, exchanges the guanine residue with 7-cyano-7-deazaguanine (preQ0) at position 15 in the dihydrouridine loop (D-loop) of archaeal tRNAs. This Nanoarchaeum equitans (strain Kin4-M) protein is tRNA-guanine(15) transglycosylase.